The primary structure comprises 393 residues: Phospho-N-acetylmuramoyl-pentapeptide-transferase (393 aa).

10 helical membrane-spanning segments follow: residues Arg29–Ile49, Thr75–Phe95, Phe101–Trp121, Tyr138–Glu158, Ser193–Gly213, Gly226–Thr246, Ala263–Phe283, Val290–Ile310, Val315–Val335, and Gln370–Leu390.

It belongs to the glycosyltransferase 4 family. MraY subfamily. The cofactor is Mg(2+).

The protein localises to the cell inner membrane. It carries out the reaction UDP-N-acetyl-alpha-D-muramoyl-L-alanyl-gamma-D-glutamyl-meso-2,6-diaminopimeloyl-D-alanyl-D-alanine + di-trans,octa-cis-undecaprenyl phosphate = di-trans,octa-cis-undecaprenyl diphospho-N-acetyl-alpha-D-muramoyl-L-alanyl-D-glutamyl-meso-2,6-diaminopimeloyl-D-alanyl-D-alanine + UMP. The protein operates within cell wall biogenesis; peptidoglycan biosynthesis. In terms of biological role, catalyzes the initial step of the lipid cycle reactions in the biosynthesis of the cell wall peptidoglycan: transfers peptidoglycan precursor phospho-MurNAc-pentapeptide from UDP-MurNAc-pentapeptide onto the lipid carrier undecaprenyl phosphate, yielding undecaprenyl-pyrophosphoryl-MurNAc-pentapeptide, known as lipid I. The polypeptide is Phospho-N-acetylmuramoyl-pentapeptide-transferase (Methylibium petroleiphilum (strain ATCC BAA-1232 / LMG 22953 / PM1)).